The sequence spans 493 residues: Acetylcholine receptor subunit beta (493 aa).

Residues 1–24 (MENVRRMALGLVVMMALALSGVGA) form the signal peptide. The Extracellular portion of the chain corresponds to 25-240 (SVMEDTLLSV…VTFYLIIQRK (216 aa)). C152 and C166 form a disulfide bridge. Residue N165 is glycosylated (N-linked (GlcNAc...) asparagine). A run of 3 helical transmembrane segments spans residues 241-265 (PLFY…VFYL), 273-291 (MSLS…LLLA), and 307-328 (YLMF…VLNL). Residues 329–461 (HHRSPNTHTM…WQYVAMVADR (133 aa)) are Cytoplasmic-facing. Y379 carries the post-translational modification Phosphotyrosine; by Tyr-kinases. The chain crosses the membrane as a helical span at residues 462–480 (LFLYVFFVICSIGTFSIFL).

The protein belongs to the ligand-gated ion channel (TC 1.A.9) family. Acetylcholine receptor (TC 1.A.9.1) subfamily. Beta-1/CHRNB1 sub-subfamily. Pentamer of two alpha chains, and one each of the beta, delta, and gamma chains.

It localises to the postsynaptic cell membrane. The protein resides in the cell membrane. It catalyses the reaction K(+)(in) = K(+)(out). The enzyme catalyses Na(+)(in) = Na(+)(out). Its function is as follows. After binding acetylcholine, the AChR responds by an extensive change in conformation that affects all subunits and leads to opening of an ion-conducting channel across the plasma membrane. The chain is Acetylcholine receptor subunit beta (CHRNB1) from Tetronarce californica (Pacific electric ray).